The primary structure comprises 771 residues: Conserved oligomeric Golgi complex subunit 6 (771 aa).

It belongs to the COG6 family.

It is found in the golgi apparatus membrane. Its function is as follows. Acts as a component of the peripheral membrane COG complex that is involved in intra-Golgi protein trafficking. COG is located at the cis-Golgi, and regulates tethering of retrograde intra-Golgi vesicles and possibly a number of other membrane trafficking events. The sequence is that of Conserved oligomeric Golgi complex subunit 6 (COG6) from Candida albicans (strain SC5314 / ATCC MYA-2876) (Yeast).